A 970-amino-acid chain; its full sequence is Translation initiation factor IF-2 (970 aa).

2 disordered regions span residues 54-270 and 328-348; these read KILA…TATQ and DKRR…KSLS. Positions 87 to 96 are enriched in low complexity; the sequence is QEAQPVEAQP. The span at 98–112 shows a compositional bias: polar residues; sequence YEEQPSYEEQPSYEE. Residues 121–149 are compositionally biased toward low complexity; it reads EVAAEAAPEPVEEPASSPEGGAPAGGAEP. Composition is skewed to pro residues over residues 150 to 160 and 168 to 182; these read QPAPEAPPPSA and PSAP…PAPS. Low complexity predominate over residues 183–253; sequence VPAGAQPPGA…PHGPGAQPGQ (71 aa). Residues 469–638 form the tr-type G domain; sequence IRPPVVTVMG…ALQSEVLELK (170 aa). Residues 478 to 485 are G1; that stretch reads GHVDHGKT. A GTP-binding site is contributed by 478–485; that stretch reads GHVDHGKT. The G2 stretch occupies residues 503–507; sequence GITQH. Residues 524–527 are G3; that stretch reads DTPG. GTP-binding positions include 524-528 and 578-581; these read DTPGH and NKID. A G4 region spans residues 578–581; that stretch reads NKID. A G5 region spans residues 614-616; that stretch reads SAR.

Belongs to the TRAFAC class translation factor GTPase superfamily. Classic translation factor GTPase family. IF-2 subfamily.

It localises to the cytoplasm. Its function is as follows. One of the essential components for the initiation of protein synthesis. Protects formylmethionyl-tRNA from spontaneous hydrolysis and promotes its binding to the 30S ribosomal subunits. Also involved in the hydrolysis of GTP during the formation of the 70S ribosomal complex. The sequence is that of Translation initiation factor IF-2 from Anaeromyxobacter sp. (strain Fw109-5).